A 96-amino-acid polypeptide reads, in one-letter code: Putative pterin-4-alpha-carbinolamine dehydratase (96 aa).

It belongs to the pterin-4-alpha-carbinolamine dehydratase family.

It catalyses the reaction (4aS,6R)-4a-hydroxy-L-erythro-5,6,7,8-tetrahydrobiopterin = (6R)-L-erythro-6,7-dihydrobiopterin + H2O. The protein is Putative pterin-4-alpha-carbinolamine dehydratase of Prochlorococcus marinus (strain SARG / CCMP1375 / SS120).